A 335-amino-acid polypeptide reads, in one-letter code: Glucokinase (335 aa).

11–16 provides a ligand contact to ATP; that stretch reads ADIGGT.

It belongs to the bacterial glucokinase family.

The protein localises to the cytoplasm. The catalysed reaction is D-glucose + ATP = D-glucose 6-phosphate + ADP + H(+). The chain is Glucokinase from Xanthomonas oryzae pv. oryzae (strain MAFF 311018).